The following is a 110-amino-acid chain: Large ribosomal subunit protein uL23c (110 aa).

The protein belongs to the universal ribosomal protein uL23 family. As to quaternary structure, part of the 50S ribosomal subunit.

It is found in the plastid. The protein localises to the chloroplast. Its function is as follows. Binds to 23S rRNA. This chain is Large ribosomal subunit protein uL23c (rpl23), found in Porphyra purpurea (Red seaweed).